The following is a 234-amino-acid chain: Enterobactin synthase component D (234 aa).

Mg(2+) contacts are provided by Asp107, Glu109, and Glu152.

This sequence belongs to the P-Pant transferase superfamily. EntD family. As to quaternary structure, entB, EntD, EntE, and EntF form a multienzyme complex called enterobactin synthase. Requires Mg(2+) as cofactor.

The protein localises to the membrane. It catalyses the reaction apo-[aryl-carrier protein] + CoA = holo-[aryl-carrier protein] + adenosine 3',5'-bisphosphate + H(+). The catalysed reaction is apo-[peptidyl-carrier protein] + CoA = holo-[peptidyl-carrier protein] + adenosine 3',5'-bisphosphate + H(+). It functions in the pathway siderophore biosynthesis; enterobactin biosynthesis. In terms of biological role, involved in the biosynthesis of the siderophore enterobactin (enterochelin), which is a macrocyclic trimeric lactone of N-(2,3-dihydroxybenzoyl)-serine. The serine trilactone serves as a scaffolding for the three catechol functionalities that provide hexadentate coordination for the tightly ligated iron(2+) atoms. Plays an essential role in the assembly of the enterobactin by catalyzing the transfer of the 4'-phosphopantetheine (Ppant) moiety from coenzyme A to the apo-domains of both EntB (ArCP domain) and EntF (PCP domain) to yield their holo-forms which make them competent for the activation of 2,3-dihydroxybenzoate (DHB) and L-serine, respectively. In Salmonella typhi, this protein is Enterobactin synthase component D.